Here is a 256-residue protein sequence, read N- to C-terminus: Polycomb group RING finger protein 5 (256 aa).

The segment at 18–57 (CYICKGYLIKPTTVTECLHTFCKTCIVQHFEDSNDCPRCG) adopts an RING-type zinc-finger fold. 2 stretches are compositionally biased toward basic and acidic residues: residues 94–103 (ESEFWKKNKP) and 110–120 (DTSKADKPKVD). The disordered stretch occupies residues 94–133 (ESEFWKKNKPQENGQDDTSKADKPKVDEEGDENEDDKDYH).

As to quaternary structure, component of a PRC1-like complex that contains PCGF5, RNF2 and UBE2D3. Interacts with RNF2; the interaction is direct. Interacts with CBX6, CBX7 and CBX8. Interacts with AUTS2; the interaction is direct. Identified in a complex that contains AUTS2, PCGF5, CSNK2B and RNF2.

It localises to the nucleus. It is found in the nucleoplasm. Functionally, component of a Polycomb group (PcG) multiprotein PRC1-like complex, a complex class required to maintain the transcriptionally repressive state of many genes, including Hox genes, throughout development. PcG PRC1 complex acts via chromatin remodeling and modification of histones; it mediates monoubiquitination of histone H2A 'Lys-119', rendering chromatin heritably changed in its expressibility. Within the PRC1-like complex, regulates RNF2 ubiquitin ligase activity. Plays a redundant role with PCGF3 as part of a PRC1-like complex that mediates monoubiquitination of histone H2A 'Lys-119' on the X chromosome and is required for normal silencing of one copy of the X chromosome in XX females. The sequence is that of Polycomb group RING finger protein 5 (PCGF5) from Homo sapiens (Human).